Here is a 284-residue protein sequence, read N- to C-terminus: Acetyl-coenzyme A carboxylase carboxyl transferase subunit beta (284 aa).

The CoA carboxyltransferase N-terminal domain occupies 27–284 (LMTKCPSCKY…ELHDGGVRHV (258 aa)). Cys31, Cys34, Cys50, and Cys52 together coordinate Zn(2+). Residues 31–52 (CPSCKYMHYTKQLNENHKVCDC) form a C4-type zinc finger.

It belongs to the AccD/PCCB family. As to quaternary structure, acetyl-CoA carboxylase is a heterohexamer composed of biotin carboxyl carrier protein (AccB), biotin carboxylase (AccC) and two subunits each of ACCase subunit alpha (AccA) and ACCase subunit beta (AccD). Requires Zn(2+) as cofactor.

The protein resides in the cytoplasm. The catalysed reaction is N(6)-carboxybiotinyl-L-lysyl-[protein] + acetyl-CoA = N(6)-biotinyl-L-lysyl-[protein] + malonyl-CoA. The protein operates within lipid metabolism; malonyl-CoA biosynthesis; malonyl-CoA from acetyl-CoA: step 1/1. Functionally, component of the acetyl coenzyme A carboxylase (ACC) complex. Biotin carboxylase (BC) catalyzes the carboxylation of biotin on its carrier protein (BCCP) and then the CO(2) group is transferred by the transcarboxylase to acetyl-CoA to form malonyl-CoA. The chain is Acetyl-coenzyme A carboxylase carboxyl transferase subunit beta from Exiguobacterium sp. (strain ATCC BAA-1283 / AT1b).